A 347-amino-acid chain; its full sequence is Sesquiterpene synthase M422DRAFT_47084 (347 aa).

Mg(2+) contacts are provided by D93, N228, S232, and E236. Residues 93-97 carry the DDXXD motif motif; it reads DEYTD. (2E,6E)-farnesyl diphosphate contacts are provided by R318 and Y319.

This sequence belongs to the terpene synthase family. Mg(2+) is required as a cofactor.

It catalyses the reaction (2E,6E)-farnesyl diphosphate = viridiflorene + diphosphate. Functionally, terpene cyclase that catalyzes the cyclization of farnesyl diphosphate (FPP) to viridiflorene and viridiflorol. This Sphaerobolus stellatus (strain SS14) protein is Sesquiterpene synthase M422DRAFT_47084.